Consider the following 257-residue polypeptide: AN1-type zinc finger protein 2B (257 aa).

2 AN1-type zinc fingers span residues 4–52 (PDLG…QKDI) and 94–142 (KIFT…HPTS). Cys-10, Cys-15, Cys-25, Cys-28, Cys-33, His-36, His-42, Cys-44, Cys-100, Cys-105, Cys-115, Cys-118, Cys-123, His-126, His-132, and Cys-134 together coordinate Zn(2+). The segment at 141-151 (TSRAGLAAISR) is VCP/p97-interacting motif (VIM). Positions 153–187 (QGLASTSTVPSPSRTLPSSSSPSRATPQLPPRTTS) are disordered. The segment covering 156-179 (ASTSTVPSPSRTLPSSSSPSRATP) has biased composition (low complexity). Phosphoserine is present on residues Ser-163, Ser-173, and Ser-187. 2 consecutive UIM domains span residues 197-216 (SEDE…AKPQ) and 221-240 (QEEE…AEYQ). At Cys-254 the chain carries Cysteine methyl ester. Residue Cys-254 is the site of S-geranylgeranyl cysteine attachment. Positions 254–257 (CSLC) match the CAAX motif motif. Residues 255–257 (SLC) constitute a propeptide, removed in mature form.

Binds 'Lys-48'-linked polyubiquitin chains of ubiquitinated proteins. Associates with the proteasome complex; upon exposure to arsenite. Interacts (via VIM motif) with VCP; the interaction is direct. Interacts with BAG6. Interacts with IGF1R (nascent precursor form). Interacts with DERL1, FAF2, NPLOC4 and UFD1; probably through VCP. Phosphorylated by MAPK14. Phosphorylation has no effect on association with the proteasome complex.

The protein localises to the endoplasmic reticulum membrane. In terms of biological role, plays a role in protein homeostasis by regulating both the translocation and the ubiquitin-mediated proteasomal degradation of nascent proteins at the endoplasmic reticulum. It is involved in the regulation of signal-mediated translocation of proteins into the endoplasmic reticulum. It also plays a role in the ubiquitin-mediated proteasomal degradation of proteins for which signal-mediated translocation to the endoplasmic reticulum has failed. May therefore function in the endoplasmic reticulum stress-induced pre-emptive quality control, a mechanism that selectively attenuates the translocation of newly synthesized proteins into the endoplasmic reticulum and reroutes them to the cytosol for proteasomal degradation. By controlling the steady-state expression of the IGF1R receptor, indirectly regulates the insulin-like growth factor receptor signaling pathway. The chain is AN1-type zinc finger protein 2B from Rattus norvegicus (Rat).